Reading from the N-terminus, the 341-residue chain is Protein huluwa (341 aa).

At 1–36 (MVTLSPAYLPSDGGTQAASAAPSVEENWVVQPSLTL) the chain is on the extracellular side. A helical membrane pass occupies residues 37–57 (LVLLLVPCVLLLFFLNCFLLF). Residues 58-341 (HRLPAFSLRK…PMMCSKQYWI (284 aa)) are Cytoplasmic-facing. Positions 206 to 211 (VPPNTP) match the VPPNSP motif motif.

This sequence belongs to the huluwa family. Interacts with axin1; leading to promote the tankyrase-mediated degradation of axin. Interacts with axin2; leading to promote the tankyrase-mediated degradation of axin.

The protein localises to the cell membrane. Functionally, key maternal determinant of the dorsal organizer and body axis formation in vertebrates that acts by promoting stabilization of beta-catenin (ctnnb1). Localizes on the plasma membrane of the future dorsal blastomeres in early blastulas and binds to and promotes the tankyrase-mediated degradation of axin (axin1 and axin2). Axin degradation results in stabilization and nuclear translocation of beta-catenin (ctnnb1) for activating organizer-specific target gene expression. The polypeptide is Protein huluwa (Xenopus laevis (African clawed frog)).